Reading from the N-terminus, the 452-residue chain is Cell division protein FtsZ (452 aa).

GTP is bound by residues 24–28 (GAGSN), 111–113 (GTG), Glu142, Arg146, and Asp190. The disordered stretch occupies residues 432 to 452 (DQDNKESDIHDIPAFLRKKRD). Positions 433–442 (QDNKESDIHD) are enriched in basic and acidic residues.

Belongs to the FtsZ family. Homodimer. Polymerizes to form a dynamic ring structure in a strictly GTP-dependent manner. Interacts directly with several other division proteins.

It is found in the cytoplasm. In terms of biological role, essential cell division protein that forms a contractile ring structure (Z ring) at the future cell division site. The regulation of the ring assembly controls the timing and the location of cell division. One of the functions of the FtsZ ring is to recruit other cell division proteins to the septum to produce a new cell wall between the dividing cells. Binds GTP and shows GTPase activity. The sequence is that of Cell division protein FtsZ from Rickettsia conorii (strain ATCC VR-613 / Malish 7).